We begin with the raw amino-acid sequence, 219 residues long: Casparian strip membrane protein 3 (219 aa).

The tract at residues 1–43 (MDPGREDEVPLAATSPESRRTRSNGRGKATVGDAPPPAETVVS) is disordered. The Cytoplasmic portion of the chain corresponds to 1-57 (MDPGREDEVPLAATSPESRRTRSNGRGKATVGDAPPPAETVVSTKAAPLPTGGWKKG). A helical membrane pass occupies residues 58 to 78 (IAILDFILRLGAIGAAMGASI). The Extracellular segment spans residues 79–108 (LMGTNEQILPFFTQFLQFHAQWDDFPVFKL). A helical membrane pass occupies residues 109–129 (FVVLNALAGGFLILSLPLSIV). The Cytoplasmic segment spans residues 130–147 (CIVRPLAVGPRFLLLITD). The chain crosses the membrane as a helical span at residues 148 to 168 (LVNMATVIAAASAAAAIVYVA). Residues 169 to 193 (HNGSQDANWIAICQQFTDFCQGTSE) are Extracellular-facing. Residue Asn170 is glycosylated (N-linked (GlcNAc...) asparagine). A helical transmembrane segment spans residues 194-214 (AVVVSFVAAVFLVCLIVVSTL). Residues 215–219 (ALKRT) lie on the Cytoplasmic side of the membrane.

The protein belongs to the Casparian strip membrane proteins (CASP) family. As to quaternary structure, homodimer and heterodimers.

It localises to the cell membrane. Functionally, regulates membrane-cell wall junctions and localized cell wall deposition. Required for establishment of the Casparian strip membrane domain (CSD) and the subsequent formation of Casparian strips, a cell wall modification of the root endodermis that determines an apoplastic barrier between the intraorganismal apoplasm and the extraorganismal apoplasm and prevents lateral diffusion. In Lotus japonicus (Lotus corniculatus var. japonicus), this protein is Casparian strip membrane protein 3.